The primary structure comprises 516 residues: Putative transposase y4bL/y4kJ/y4tB (516 aa).

The HTH IS408-type domain maps to 15–96 (IRTILRLTHE…PDWALVVREL (82 aa)). Residues 138-319 (FRNRHAAGAV…SRRELFEEIE (182 aa)) form the Integrase catalytic domain. The disordered stretch occupies residues 493 to 516 (ERPQAEHAAPTPAHTNIRGRSYYQ).

Belongs to the transposase IS21/IS408/IS1162 family.

This Sinorhizobium fredii (strain NBRC 101917 / NGR234) protein is Putative transposase y4bL/y4kJ/y4tB.